We begin with the raw amino-acid sequence, 316 residues long: Cell division protein FtsQ (316 aa).

Positions 1 to 34 (MAKAARRTKSAPARRSPRRHARQTGATIRRPKRP) are disordered. At 1–61 (MAKAARRTKS…HPLLKQMAKR (61 aa)) the chain is on the cytoplasmic side. Residues 62 to 80 (LLLILVIVGFLAGLWAARW) form a helical membrane-spanning segment. At 81–316 (PQLLATKTGE…AADPLVSDRI (236 aa)) the chain is on the periplasmic side. Positions 97–165 (FSVRHVEIVG…DTLVVDIVER (69 aa)) constitute a POTRA domain. Positions 295-316 (PEPVKKATKPAKAADPLVSDRI) are disordered.

This sequence belongs to the FtsQ/DivIB family. FtsQ subfamily.

Its subcellular location is the cell inner membrane. Essential cell division protein. This is Cell division protein FtsQ from Zymomonas mobilis subsp. mobilis (strain ATCC 31821 / ZM4 / CP4).